The following is a 149-amino-acid chain: MGIHQCTAVVLLLLCASLSTYGQPAEIRRRYEHFLTQHVYGGITEQTCDRVMRQRRITRFPTGNDCKEVNTFIQANGNHVRTVCTGGGTRQTDNRDLYMSNNQFTVITCTLRSGERHPNCRYRGKESSRKIVVACEGEWPTHYEKGVIV.

Residues 1-22 (MGIHQCTAVVLLLLCASLSTYG) form the signal peptide. Gln23 carries the post-translational modification Pyrrolidone carboxylic acid. His38 serves as the catalytic Proton acceptor. Cystine bridges form between Cys48-Cys109, Cys66-Cys120, and Cys84-Cys135. 67–71 (KEVNT) contacts substrate. The active-site Proton donor is His142.

This sequence belongs to the pancreatic ribonuclease family. Post-translationally, cleavage between Arg-55 and Arg-56 is catalyzed by a membrane-localized Gram-negative bacterium protease (OmpT in E.coli). The excised fragment is then transported to the bacterium cytosol for cleavage of the disulfide bridge linking Cys-48 and Cys-109, thus separating the N-terminal and LF-ZF3. LF-ZF3 but not the N-terminal peptide possesses bactericidal activity. In terms of tissue distribution, strongly expressed in the adult liver and gut, and weakly in the heart and testis.

The protein localises to the secreted. Ribonuclease. Angiogenic. Plays a role in host defense. Exhibits strong antibacterial activity against Gram-negative bacteria but mild antibacterial activity against Gram-positive bacteria. The RNase activity is not required for the bactericidal activity. The sequence is that of Ribonuclease-like 3 from Danio rerio (Zebrafish).